Here is a 426-residue protein sequence, read N- to C-terminus: 4-aminobutyrate aminotransferase GabT (426 aa).

Residues 111-112 (GS) and Gln242 each bind pyridoxal 5'-phosphate. The residue at position 268 (Lys268) is an N6-(pyridoxal phosphate)lysine. Residue Thr297 participates in pyridoxal 5'-phosphate binding.

Belongs to the class-III pyridoxal-phosphate-dependent aminotransferase family. As to quaternary structure, homotetramer. Pyridoxal 5'-phosphate serves as cofactor.

It catalyses the reaction 4-aminobutanoate + 2-oxoglutarate = succinate semialdehyde + L-glutamate. It carries out the reaction 5-aminopentanoate + 2-oxoglutarate = 5-oxopentanoate + L-glutamate. Its pathway is amino-acid degradation; 4-aminobutanoate degradation. It participates in amino-acid degradation. Its function is as follows. Pyridoxal phosphate-dependent enzyme that catalyzes transamination between primary amines and alpha-keto acids. Catalyzes the transfer of the amino group from gamma-aminobutyrate (GABA) to alpha-ketoglutarate (KG) to yield succinic semialdehyde (SSA) and glutamate. Thereby functions in a GABA degradation pathway that allows some E.coli strains to utilize GABA as a nitrogen source for growth. Also catalyzes the conversion of 5-aminovalerate to glutarate semialdehyde, as part of a L-lysine degradation pathway that proceeds via cadaverine, glutarate and L-2-hydroxyglutarate. The protein is 4-aminobutyrate aminotransferase GabT (gabT) of Escherichia coli (strain K12).